We begin with the raw amino-acid sequence, 131 residues long: MNPAYRKAMLESEIQKLLMEALQQLRDPRLKKDFVTFSRVELSKDKRYADVYVSFLGTPEERKETVEILNRAKGFFRTFISKNLRLYVAPEIRFYEDKGIEASVKVHQLLVQLGYDPLKDKEKKEEDKEEE.

The protein belongs to the RbfA family. In terms of assembly, monomer. Binds 30S ribosomal subunits, but not 50S ribosomal subunits or 70S ribosomes.

The protein resides in the cytoplasm. Functionally, one of several proteins that assist in the late maturation steps of the functional core of the 30S ribosomal subunit. Associates with free 30S ribosomal subunits (but not with 30S subunits that are part of 70S ribosomes or polysomes). Required for efficient processing of 16S rRNA. May interact with the 5'-terminal helix region of 16S rRNA. This chain is Ribosome-binding factor A, found in Thermotoga petrophila (strain ATCC BAA-488 / DSM 13995 / JCM 10881 / RKU-1).